The sequence spans 323 residues: Cuticle collagen 39 (323 aa).

The first 28 residues, 1 to 28 (MTGPTCLAVVAGISGVFVFGALFSVAQI), serve as a signal peptide directing secretion. A compositionally biased stretch (polar residues) spans 80–89 (QCNCGPQASN). The tract at residues 80-293 (QCNCGPQASN…GAAEQGYRHR (214 aa)) is disordered. Triple-helical region stretches follow at residues 93–125 (GPPG…AGPK), 138–200 (GSPG…GGQR), and 203–265 (GLPG…PGAD). The segment covering 108–117 (GQPGGAGNPG) has biased composition (gly residues). A compositionally biased stretch (low complexity) spans 136–146 (PAGSPGPAGAP). Gly residues predominate over residues 159 to 168 (GHPGQGGSQG). The segment covering 169-191 (PAGPRGPAGDAGAPGQVGAPGNP) has biased composition (low complexity). The span at 224-233 (GQSGGQGQQG) shows a compositional bias: gly residues. A compositionally biased stretch (low complexity) spans 234–267 (PAGPAGPDGQPGQPGQDGQAGAPGNDGAPGADAA).

This sequence belongs to the cuticular collagen family. In terms of assembly, collagen polypeptide chains are complexed within the cuticle by disulfide bonds and other types of covalent cross-links.

Its function is as follows. Nematode cuticles are composed largely of collagen-like proteins. The cuticle functions both as an exoskeleton and as a barrier to protect the worm from its environment. This chain is Cuticle collagen 39 (col-39), found in Caenorhabditis elegans.